We begin with the raw amino-acid sequence, 215 residues long: Adenylate kinase (215 aa).

10 to 15 (GAGKGT) contacts ATP. The NMP stretch occupies residues 30–59 (STGDMLREAVAAGTELGKKVKEIIEKGLLV). AMP is bound by residues Thr31, Arg36, 57 to 59 (LLV), 85 to 88 (GFPR), and Gln92. Residues 126-163 (SRRVCPSCGKVYNLLTIKPKNDMLCDDCNIGLIQREDD) form an LID region. Arg127 serves as a coordination point for ATP. Positions 130 and 133 each coordinate Zn(2+). 136–137 (VY) provides a ligand contact to ATP. Residues Cys150 and Cys153 each contribute to the Zn(2+) site. Arg160 and Arg171 together coordinate AMP. An ATP-binding site is contributed by Leu199.

It belongs to the adenylate kinase family. In terms of assembly, monomer.

It is found in the cytoplasm. The enzyme catalyses AMP + ATP = 2 ADP. The protein operates within purine metabolism; AMP biosynthesis via salvage pathway; AMP from ADP: step 1/1. Catalyzes the reversible transfer of the terminal phosphate group between ATP and AMP. Plays an important role in cellular energy homeostasis and in adenine nucleotide metabolism. In Kosmotoga olearia (strain ATCC BAA-1733 / DSM 21960 / TBF 19.5.1), this protein is Adenylate kinase.